The sequence spans 129 residues: Endocuticle structural glycoprotein SgAbd-9 (129 aa).

Gln-1 is modified (pyrrolidone carboxylic acid). The Chitin-binding type R&amp;R domain occupies 28–98 (DGSYTFSYES…VGNVVAPAIS (71 aa)). A glycan (O-linked (HexNAc...) threonine) is linked at Thr-120.

In terms of biological role, component of the abdominal endocuticle. The polypeptide is Endocuticle structural glycoprotein SgAbd-9 (Schistocerca gregaria (Desert locust)).